We begin with the raw amino-acid sequence, 69 residues long: DNA gyrase inhibitor YacG (69 aa).

The Zn(2+) site is built by Cys12, Cys15, Cys31, and Cys35. A disordered region spans residues 49-69 (RVPVEPKPDEGETPDQAERPQ).

The protein belongs to the DNA gyrase inhibitor YacG family. As to quaternary structure, interacts with GyrB. Requires Zn(2+) as cofactor.

Its function is as follows. Inhibits all the catalytic activities of DNA gyrase by preventing its interaction with DNA. Acts by binding directly to the C-terminal domain of GyrB, which probably disrupts DNA binding by the gyrase. The chain is DNA gyrase inhibitor YacG from Thiobacillus denitrificans (strain ATCC 25259 / T1).